The chain runs to 140 residues: Ctenidin-1 (140 aa).

The first 19 residues, 1 to 19 (MKHLIPLIVMASVVLAVYA), serve as a signal peptide directing secretion. Position 138 is a glycine amide (Gly-138).

It belongs to the glycine-rich peptide family. As to expression, expressed in hemocytes (at protein level).

The protein localises to the secreted. Its function is as follows. Antimicrobial protein with bacteriostatic activity against the Gram-negative bacterium E.coli, and very weak activity against the Gram-positive bacterium S.aureus. Lacks activity against the yeast C.albicans. The protein is Ctenidin-1 of Cupiennius salei (American wandering spider).